A 131-amino-acid chain; its full sequence is Large ribosomal subunit protein uL14m (131 aa).

The protein belongs to the universal ribosomal protein uL14 family. As to quaternary structure, component of the mitochondrial large ribosomal subunit (mt-LSU). Mature N.crassa 74S mitochondrial ribosomes consist of a small (37S) and a large (54S) subunit. The 37S small subunit contains a 16S ribosomal RNA (16S mt-rRNA) and 32 different proteins. The 54S large subunit contains a 23S rRNA (23S mt-rRNA) and 42 different proteins.

Its subcellular location is the mitochondrion. Its function is as follows. Component of the mitochondrial ribosome (mitoribosome), a dedicated translation machinery responsible for the synthesis of mitochondrial genome-encoded proteins, including at least some of the essential transmembrane subunits of the mitochondrial respiratory chain. The mitoribosomes are attached to the mitochondrial inner membrane and translation products are cotranslationally integrated into the membrane. The sequence is that of Large ribosomal subunit protein uL14m (mrpl38) from Neurospora crassa (strain ATCC 24698 / 74-OR23-1A / CBS 708.71 / DSM 1257 / FGSC 987).